Reading from the N-terminus, the 898-residue chain is Alanine--tRNA ligase (898 aa).

Zn(2+) contacts are provided by His-582, His-586, Cys-685, and His-689.

It belongs to the class-II aminoacyl-tRNA synthetase family. Zn(2+) serves as cofactor.

It is found in the cytoplasm. The catalysed reaction is tRNA(Ala) + L-alanine + ATP = L-alanyl-tRNA(Ala) + AMP + diphosphate. In terms of biological role, catalyzes the attachment of alanine to tRNA(Ala) in a two-step reaction: alanine is first activated by ATP to form Ala-AMP and then transferred to the acceptor end of tRNA(Ala). Also edits incorrectly charged Ser-tRNA(Ala) and Gly-tRNA(Ala) via its editing domain. The polypeptide is Alanine--tRNA ligase (Mycolicibacterium vanbaalenii (strain DSM 7251 / JCM 13017 / BCRC 16820 / KCTC 9966 / NRRL B-24157 / PYR-1) (Mycobacterium vanbaalenii)).